A 151-amino-acid polypeptide reads, in one-letter code: Small ribosomal subunit protein uS15 (151 aa).

This sequence belongs to the universal ribosomal protein uS15 family.

This chain is Small ribosomal subunit protein uS15 (RPS13), found in Ciona intestinalis (Transparent sea squirt).